Here is a 190-residue protein sequence, read N- to C-terminus: MEFSLQYITIFIFVILFLIGLFSSKSRSTRRNEKKSRLYLSTENKINIVNKNDHLDVVILSKYKRKALMNKSEYQLFLRLEKLLSKGYQEFRLFTQVSMGEFLESIDKEAHFAINSKRVDFLIVDKNGYAVIVIEYQGQGHYQDNAAKRDAVKREACRKAGVIFLEFQPNYGKAELEFVGENLKRYLIKN.

An N-terminal signal peptide occupies residues 1 to 28; the sequence is MEFSLQYITIFIFVILFLIGLFSSKSRS.

This is an uncharacterized protein from Haemophilus influenzae (strain ATCC 51907 / DSM 11121 / KW20 / Rd).